Reading from the N-terminus, the 159-residue chain is 3-hydroxyacyl-[acyl-carrier-protein] dehydratase FabZ (159 aa).

Residue histidine 59 is part of the active site.

The protein belongs to the thioester dehydratase family. FabZ subfamily.

The protein resides in the cytoplasm. The enzyme catalyses a (3R)-hydroxyacyl-[ACP] = a (2E)-enoyl-[ACP] + H2O. Its function is as follows. Involved in unsaturated fatty acids biosynthesis. Catalyzes the dehydration of short chain beta-hydroxyacyl-ACPs and long chain saturated and unsaturated beta-hydroxyacyl-ACPs. This Caulobacter vibrioides (strain ATCC 19089 / CIP 103742 / CB 15) (Caulobacter crescentus) protein is 3-hydroxyacyl-[acyl-carrier-protein] dehydratase FabZ.